A 508-amino-acid polypeptide reads, in one-letter code: Histidine ammonia-lyase (508 aa).

Positions 143–145 (ASG) form a cross-link, 5-imidazolinone (Ala-Gly). 2,3-didehydroalanine (Ser) is present on Ser144.

This sequence belongs to the PAL/histidase family. Post-translationally, contains an active site 4-methylidene-imidazol-5-one (MIO), which is formed autocatalytically by cyclization and dehydration of residues Ala-Ser-Gly.

It localises to the cytoplasm. It carries out the reaction L-histidine = trans-urocanate + NH4(+). It functions in the pathway amino-acid degradation; L-histidine degradation into L-glutamate; N-formimidoyl-L-glutamate from L-histidine: step 1/3. This chain is Histidine ammonia-lyase, found in Anaeromyxobacter dehalogenans (strain 2CP-C).